Consider the following 578-residue polypeptide: Sulfite reductase [NADPH] hemoprotein beta-component (578 aa).

Positions 441, 447, 487, and 491 each coordinate [4Fe-4S] cluster. Siroheme is bound at residue C491.

Belongs to the nitrite and sulfite reductase 4Fe-4S domain family. Alpha(8)-beta(8). The alpha component is a flavoprotein, the beta component is a hemoprotein. Siroheme is required as a cofactor. It depends on [4Fe-4S] cluster as a cofactor.

It catalyses the reaction hydrogen sulfide + 3 NADP(+) + 3 H2O = sulfite + 3 NADPH + 4 H(+). It participates in sulfur metabolism; hydrogen sulfide biosynthesis; hydrogen sulfide from sulfite (NADPH route): step 1/1. Functionally, component of the sulfite reductase complex that catalyzes the 6-electron reduction of sulfite to sulfide. This is one of several activities required for the biosynthesis of L-cysteine from sulfate. The polypeptide is Sulfite reductase [NADPH] hemoprotein beta-component (Vibrio parahaemolyticus serotype O3:K6 (strain RIMD 2210633)).